An 85-amino-acid chain; its full sequence is Small ribosomal subunit protein uS17 (85 aa).

It belongs to the universal ribosomal protein uS17 family. Part of the 30S ribosomal subunit.

In terms of biological role, one of the primary rRNA binding proteins, it binds specifically to the 5'-end of 16S ribosomal RNA. The sequence is that of Small ribosomal subunit protein uS17 from Agathobacter rectalis (strain ATCC 33656 / DSM 3377 / JCM 17463 / KCTC 5835 / VPI 0990) (Eubacterium rectale).